The following is a 395-amino-acid chain: Protein UNIFOLIATA (395 aa).

Disordered stretches follow at residues 147–170 (SQEG…GGGS) and 185–223 (QIRR…GERQ). The span at 202–211 (EEGEEEEEDN) shows a compositional bias: acidic residues. 3 DNA-binding regions span residues 224–228 (REHPF), 293–300 (NKPKMRHY), and 364–367 (YGPT).

This sequence belongs to the FLO/LFY family. Highly expressed in leaf, leaflet, inflorescence and lateral shoot primordia on the main shoot axis, and in floral organ and carpel primordia.

It localises to the nucleus. Functionally, may regulate indeterminacy during leaf and flower development. The polypeptide is Protein UNIFOLIATA (UNI) (Pisum sativum (Garden pea)).